A 472-amino-acid polypeptide reads, in one-letter code: Protein hedgehog (472 aa).

The N-palmitoyl cysteine moiety is linked to residue Cys-84. Ca(2+)-binding residues include Glu-149, Asp-154, Glu-185, Asp-188, and Asp-190. Residue Gly-256 is the site of Cholesterol glycine ester attachment.

This sequence belongs to the hedgehog family. As to quaternary structure, interacts with shf. The C-terminal part of the hedgehog protein precursor displays an autoproteolysis activity that results in the cleavage of the full-length protein into two parts (N-product and C-product). In addition, the C-terminal part displays a cholesterol transferase activity that results by the covalent attachment of a cholesterol moiety to the C-terminal of the newly generated N-product. The N-product is the active species in both local and long-range signaling, whereas the C-product has no signaling activity. Post-translationally, cholesterylation is required for N-product targeting to lipid rafts and multimerization. In terms of processing, N-palmitoylation by Rasp of the hedgehog N-product, within the secretory pathway, is required for the embryonic and larval patterning activities of the hedgehog signal.

It is found in the nucleus. The protein resides in the cytoplasm. Its subcellular location is the cell membrane. It carries out the reaction glycyl-L-cysteinyl-[protein] + cholesterol + H(+) = [protein]-C-terminal glycyl cholesterol ester + N-terminal L-cysteinyl-[protein]. In terms of biological role, the C-terminal part of the hedgehog protein precursor displays an autoproteolysis activity that results in the cleavage of the full-length protein into two parts (N-product and C-product). In addition, the C-terminal part displays a cholesterol transferase activity that results by the covalent attachment of a cholesterol moiety to the C-terminal of the newly generated N-product. Once cleaved, the C-product has no signaling activity and diffuses from the cell. The dually lipidated hedgehog protein N-product is a morphogen which is essential for a variety of patterning events during development. Establishes the anterior-posterior axis of the embryonic segments and patterns the larval imaginal disks. Binds to the patched (ptc) receptor, which functions in association with smoothened (smo), to activate the transcription of target genes wingless (wg), decapentaplegic (dpp) and ptc. In the absence of hh, ptc represses the constitutive signaling activity of smo through fused (fu). Essential component of a signaling pathway which regulates the Duox-dependent gut immune response to bacterial uracil; required to activate Cad99C-dependent endosome formation, norpA-dependent Ca2+ mobilization and p38 MAPK, which are essential steps in the Duox-dependent production of reactive oxygen species (ROS) in response to intestinal bacterial infection. During photoreceptor differentiation, it up-regulates transcription of Ubr3, which in turn promotes the hh-signaling pathway by mediating the ubiquitination and degradation of cos. The polypeptide is Protein hedgehog (Drosophila ananassae (Fruit fly)).